The sequence spans 167 residues: Histidinol dehydrogenase (167 aa).

Zn(2+) is bound by residues Gln-109 and His-112.

This sequence belongs to the histidinol dehydrogenase family. As to quaternary structure, homodimer. The cofactor is Zn(2+).

The enzyme catalyses L-histidinol + 2 NAD(+) + H2O = L-histidine + 2 NADH + 3 H(+). It functions in the pathway amino-acid biosynthesis; L-histidine biosynthesis; L-histidine from 5-phospho-alpha-D-ribose 1-diphosphate: step 9/9. Catalyzes the sequential NAD-dependent oxidations of L-histidinol to L-histidinaldehyde and then to L-histidine. In Salmonella enteritidis, this protein is Histidinol dehydrogenase (hisD).